The following is a 40-amino-acid chain: Thioredoxin (40 aa).

An intrachain disulfide couples Cys29 to Cys32.

The protein belongs to the thioredoxin family.

Its function is as follows. Participates in various redox reactions through the reversible oxidation of its active center dithiol to a disulfide and catalyzes dithiol-disulfide exchange reactions. The protein is Thioredoxin (trxA) of Clostridium sporogenes.